Here is an 876-residue protein sequence, read N- to C-terminus: Senescence-induced receptor-like serine/threonine-protein kinase (876 aa).

Residues 1-24 (MAMLKSLSSILFTSFALLFFLVHA) form the signal peptide. At 25–517 (QDQSGFISID…SNTKKKNKNG (493 aa)) the chain is on the extracellular side. LRR repeat units lie at residues 415-438 (RVVSLNISFSELRGQIDPAFSNLT), 439-462 (SIRKLDLSGNTLTGEIPAFLANLP), and 463-483 (NLTELNVEGNKLTGIVPQRLH). A helical membrane pass occupies residues 518 to 538 (YIIPLVVVGIIVVLLTALALF). The Cytoplasmic segment spans residues 539–876 (RRFKKKQQRG…LDTEMVPRAR (338 aa)). A Protein kinase domain is found at 574 to 847 (NNFERVIGKG…VVMELKQIVY (274 aa)). ATP is bound by residues 580 to 588 (IGKGGFGKV) and K601. Y646 carries the phosphotyrosine modification. D697 (proton acceptor) is an active-site residue. Phosphoserine is present on S731. Phosphothreonine is present on T732. Residue Y745 is modified to Phosphotyrosine.

The protein belongs to the protein kinase superfamily. Ser/Thr protein kinase family.

The protein localises to the membrane. Involved in innate immune response of plants. This is Senescence-induced receptor-like serine/threonine-protein kinase (SIRK) from Arabidopsis thaliana (Mouse-ear cress).